The following is a 247-amino-acid chain: 3-deoxy-manno-octulosonate cytidylyltransferase (247 aa).

It belongs to the KdsB family.

The protein localises to the cytoplasm. It carries out the reaction 3-deoxy-alpha-D-manno-oct-2-ulosonate + CTP = CMP-3-deoxy-beta-D-manno-octulosonate + diphosphate. It participates in nucleotide-sugar biosynthesis; CMP-3-deoxy-D-manno-octulosonate biosynthesis; CMP-3-deoxy-D-manno-octulosonate from 3-deoxy-D-manno-octulosonate and CTP: step 1/1. Its pathway is bacterial outer membrane biogenesis; lipopolysaccharide biosynthesis. Its function is as follows. Activates KDO (a required 8-carbon sugar) for incorporation into bacterial lipopolysaccharide in Gram-negative bacteria. This is 3-deoxy-manno-octulosonate cytidylyltransferase from Afipia carboxidovorans (strain ATCC 49405 / DSM 1227 / KCTC 32145 / OM5) (Oligotropha carboxidovorans).